Reading from the N-terminus, the 139-residue chain is Putative nickel-responsive regulator (139 aa).

Ni(2+) is bound by residues His-77, His-88, His-90, and Cys-96.

This sequence belongs to the transcriptional regulatory CopG/NikR family. Ni(2+) is required as a cofactor.

Functionally, transcriptional regulator. The chain is Putative nickel-responsive regulator from Haloarcula marismortui (strain ATCC 43049 / DSM 3752 / JCM 8966 / VKM B-1809) (Halobacterium marismortui).